Consider the following 530-residue polypeptide: UDP-glucuronosyltransferase 2B7 (530 aa).

The signal sequence occupies residues 1 to 17 (MPQKWISALLLLQISFC). N-linked (GlcNAc...) asparagine glycosylation is present at Asn-316. UDP-alpha-D-glucuronate contacts are provided by residues 374 to 380 (THGGANG) and Glu-400. Residues 496 to 516 (IGFLLACVLAIVLLAVKCCLF) form a helical membrane-spanning segment.

The protein belongs to the UDP-glycosyltransferase family.

It is found in the endoplasmic reticulum membrane. It catalyses the reaction glucuronate acceptor + UDP-alpha-D-glucuronate = acceptor beta-D-glucuronoside + UDP + H(+). The enzyme catalyses 17alpha-estradiol + UDP-alpha-D-glucuronate = 17alpha-estradiol 17-O-(beta-D-glucuronate) + UDP + H(+). The catalysed reaction is 17beta-estradiol + UDP-alpha-D-glucuronate = 17beta-estradiol 17-O-(beta-D-glucuronate) + UDP + H(+). It carries out the reaction 2-hydroxy-17beta-estradiol + UDP-alpha-D-glucuronate = 2-hydroxy-17beta-estradiol 3-O-(beta-D-glucuronate) + UDP + H(+). It catalyses the reaction 4-hydroxy-17beta-estradiol + UDP-alpha-D-glucuronate = 17beta-estradiol 4-O-(beta-D-glucuronate) + UDP + H(+). The enzyme catalyses 4-hydroxyestrone + UDP-alpha-D-glucuronate = estrone 4-O-(beta-D-glucuronate) + UDP + H(+). The catalysed reaction is 16alpha-hydroxyestrone + UDP-alpha-D-glucuronate = 16alpha-hydroxyestrone 16-O-(beta-D-glucuronate) + UDP + H(+). It carries out the reaction 16alpha,17beta-estriol + UDP-alpha-D-glucuronate = 16alpha,17beta-estriol 16-O-(beta-D-glucuronate) + UDP + H(+). It catalyses the reaction 16beta,17beta-estriol + UDP-alpha-D-glucuronate = 16beta,17beta-estriol 16-O-(beta-D-glucuronate) + UDP + H(+). The enzyme catalyses 16alpha,17alpha-estriol + UDP-alpha-D-glucuronate = 16alpha,17alpha-estriol 16-O-(beta-D-glucuronate) + UDP + H(+). The catalysed reaction is 16alpha,17alpha-estriol + UDP-alpha-D-glucuronate = 16alpha,17alpha-estriol 17-O-(beta-D-glucuronate) + UDP + H(+). It carries out the reaction epitestosterone + UDP-alpha-D-glucuronate = epitestosterone 17-O-(beta-D-glucuronate) + UDP + H(+). It catalyses the reaction hyodeoxycholate + UDP-alpha-D-glucuronate = hyodeoxycholate 6-O-(beta-D-glucuronate) + UDP + H(+). The enzyme catalyses hyocholate + UDP-alpha-D-glucuronate = hyocholate 6-O-(beta-D-glucuronate) + UDP + H(+). The catalysed reaction is all-trans-retinoate + UDP-alpha-D-glucuronate = all-trans-retinoyl-1-O-(beta-D-glucuronate) + UDP. It carries out the reaction all-trans-4-hydroxyretinoate + UDP-alpha-D-glucuronate = all-trans-4-hydroxy-4-O-(beta-D-glucuronide)-retinoate + UDP + H(+). It catalyses the reaction (E)-ferulate + UDP-alpha-D-glucuronate = (E)-ferulic acid beta-D-glucuronate ester + UDP. The enzyme catalyses 8-iso-prostaglandin F2alpha + UDP-alpha-D-glucuronate = 8-iso-prostaglandin F2alpha-glucuronide + UDP + H(+). The catalysed reaction is 5-epi-5-F2t-IsoP + UDP-alpha-D-glucuronate = 5-epi-5-F2t-IsoP-glucuronide + UDP + H(+). It carries out the reaction (5Z,8Z,11Z,14Z)-eicosatetraenoate + UDP-alpha-D-glucuronate = O-[(5Z),(8Z),(11Z),(14Z)-eicosatetraenoyl]-beta-D-glucuronate + UDP. It catalyses the reaction 15-hydroxy-(5Z,8Z,11Z,13E)-eicosatetraenoate + UDP-alpha-D-glucuronate = 15-O-(beta-D-glucuronosyl)-(5Z,8Z,11Z,14Z)-eicosatetraenoate + UDP + H(+). The enzyme catalyses 20-hydroxy-(5Z,8Z,11Z,14Z)-eicosatetraenoate + UDP-alpha-D-glucuronate = 20-O-(beta-D-glucuronosyl)-(5Z,8Z,11Z,14Z)-eicosatetraenoate + UDP + H(+). The catalysed reaction is (E)-ferulate + UDP-alpha-D-glucuronate = (E)-4-O-(beta-D-glucuronosyl)-ferulate + UDP + H(+). It carries out the reaction prostaglandin B1 + UDP-alpha-D-glucuronate = 15-O-(beta-D-glucuronosyl)-prostaglandin B1 + UDP + H(+). It catalyses the reaction mycophenolate + UDP-alpha-D-glucuronate = mycophenolic acid O-acyl-beta-D-glucuronide + UDP. The enzyme catalyses losartan + UDP-alpha-D-glucuronate = losartan-2-N-beta-D-glucuronide + UDP. The catalysed reaction is candesartan + UDP-alpha-D-glucuronate = candesartan O-beta-D-glucuronoside + UDP. It carries out the reaction candesartan + UDP-alpha-D-glucuronate = candesartan-2-N-beta-D-glucuronide + UDP. It catalyses the reaction zolasartan + UDP-alpha-D-glucuronate = zolarsartan O-beta-D-glucuronoside + UDP. UDP-glucuronosyltransferase (UGT) that catalyzes phase II biotransformation reactions in which lipophilic substrates are conjugated with glucuronic acid to increase the metabolite's water solubility, thereby facilitating excretion into either the urine or bile. Essential for the elimination and detoxification of drugs, xenobiotics and endogenous compounds. Catalyzes the glucuronidation of endogenous steroid hormones such as androgens (epitestosterone, androsterone) and estrogens (estradiol, epiestradiol, estriol, catechol estrogens). Also regulates the levels of retinoic acid, a major metabolite of vitamin A involved in apoptosis, cellular growth and differentiation, and embryonic development. Contributes to bile acid (BA) detoxification by catalyzing the glucuronidation of BA substrates, which are natural detergents for dietary lipids absorption. Involved in the glucuronidation of arachidonic acid (AA) and AA-derived eicosanoids including 15-HETE, 20-HETE, PGE2, PGB1 and F2-isoprostanes (8-iso-PGF2alpha and 5-epi-5-F2t-IsoP). Involved in the glucuronidation of the phytochemical ferulic acid at the phenolic or the carboxylic acid group. Involved in the glucuronidation of the AGTR1 angiotensin receptor antagonist losartan, caderastan and zolarsatan, drugs which can inhibit the effect of angiotensin II. Also metabolizes mycophenolate, an immunosuppressive agent. The sequence is that of UDP-glucuronosyltransferase 2B7 from Rattus norvegicus (Rat).